The primary structure comprises 726 residues: MEDRLHMDNGLVPQKIVSVHLQDSTLKEVKDQVSNKQAQILEPKPEPSLEIKPEQDGMEHVGRDDPKALGEEPKQRRGSASGSEPAGDSDRGGGPVEHYHLHLSSCHECLELENSTIESVKFASAENIPDLPYDYSSSLESVADETSPEREGRRVNLTGKAPNILLYVGSDSQEALGRFHEVRSVLADCVDIDSYILYHLLEDSALRDPWTDNCLLLVIATRESIPEDLYQKFMAYLSQGGKVLGLSSSFTFGGFQVTSKGALHKTVQNLVFSKADQSEVKLSVLSSGCRYQEGPVRLSPGRLQGHLENEDKDRMIVHVPFGTRGGEAVLCQVHLELPPSSNIVQTPEDFNLLKSSNFRRYEVLREILTTLGLSCDMKQVPALTPLYLLSAAEEIRDPLMQWLGKHVDSEGEIKSGQLSLRFVSSYVSEVEITPSCIPVVTNMEAFSSEHFNLEIYRQNLQTKQLGKVILFAEVTPTTMRLLDGLMFQTPQEMGLIVIAARQTEGKGRGGNVWLSPVGCALSTLLISIPLRSQLGQRIPFVQHLMSVAVVEAVRSIPEYQDINLRVKWPNDIYYSDLMKIGGVLVNSTLMGETFYILIGCGFNVTNSNPTICINDLITEYNKQHKAELKPLRADYLIARVVTVLEKLIKEFQDKGPNSVLPLYYRYWVHSGQQVHLGSAEGPKVSIVGLDDSGFLQVHQEGGEVVTVHPDGNSFDMLRNLILPKRR.

The disordered stretch occupies residues Glu28–His98. Positions Pro43–Gln75 are enriched in basic and acidic residues. 2 positions are modified to phosphoserine: Ser147 and Ser299. In terms of domain architecture, BPL/LPL catalytic spans Lys463–Gln652.

This sequence belongs to the biotin--protein ligase family. Monomer. In terms of tissue distribution, widely expressed. Mostly expressed in muscle, placenta and to a lower extent in the brain, kidney, pancreas, liver and lung.

Its subcellular location is the cytoplasm. The protein resides in the mitochondrion. It catalyses the reaction apo-[methylmalonyl-CoA:pyruvate carboxytransferase] + biotin + ATP = holo-[methylmalonyl-CoA:pyruvate carboxytransferase] + AMP + diphosphate + H(+). It carries out the reaction apo-[propionyl-CoA:carbon-dioxide ligase (ADP-forming)] + biotin + ATP = holo-[propionyl-CoA:carbon-dioxide ligase (ADP-forming)] + AMP + diphosphate + H(+). The enzyme catalyses apo-[3-methylcrotonoyl-CoA:carbon-dioxide ligase (ADP-forming)] + biotin + ATP = holo-[3-methylcrotonoyl-CoA:carbon-dioxide ligase (ADP-forming)] + AMP + diphosphate + H(+). The catalysed reaction is biotin + L-lysyl-[protein] + ATP = N(6)-biotinyl-L-lysyl-[protein] + AMP + diphosphate + H(+). In terms of biological role, biotin--protein ligase catalyzing the biotinylation of the 4 biotin-dependent carboxylases acetyl-CoA-carboxylase, pyruvate carboxylase, propionyl-CoA carboxylase, and methylcrotonyl-CoA carboxylase. The protein is Biotin--protein ligase of Homo sapiens (Human).